A 119-amino-acid polypeptide reads, in one-letter code: Acidic phospholipase A2 2 (119 aa).

Intrachain disulfides connect cysteine 11/cysteine 71, cysteine 26/cysteine 118, cysteine 28/cysteine 44, cysteine 43/cysteine 99, cysteine 50/cysteine 92, cysteine 60/cysteine 85, and cysteine 78/cysteine 90. The Ca(2+) site is built by tyrosine 27, glycine 29, and glycine 31. Histidine 47 is a catalytic residue. Aspartate 48 contributes to the Ca(2+) binding site. Aspartate 93 is a catalytic residue.

Belongs to the phospholipase A2 family. Group I subfamily. D49 sub-subfamily. As to quaternary structure, homotrimer. Ca(2+) is required as a cofactor. Expressed by the venom gland.

The protein resides in the secreted. The catalysed reaction is a 1,2-diacyl-sn-glycero-3-phosphocholine + H2O = a 1-acyl-sn-glycero-3-phosphocholine + a fatty acid + H(+). Functionally, PLA2 catalyzes the calcium-dependent hydrolysis of the 2-acyl groups in 3-sn-phosphoglycerides. The protein is Acidic phospholipase A2 2 of Naja naja (Indian cobra).